The following is a 179-amino-acid chain: MVKLVVGIGNPGRQYVWTRHNIGFLFLDMLASRFSGAFREAPRLFSSFMKVETSCGVIVLIKPSTYVNLTGKAVLAAKRFFGVSVEGILIVADDINREFGSIRFRQDCGAGGHNGLKNTTQVLQSNHYWQLRLGVGRPSNPESEGVADYVLSNFSFNERKSLNGFFEKGIEEISPWLGF.

Residue Tyr-15 participates in tRNA binding. The Proton acceptor role is filled by His-20. Residues Tyr-66, Asn-68, and Asn-114 each coordinate tRNA.

The protein belongs to the PTH family. Monomer.

It localises to the cytoplasm. It catalyses the reaction an N-acyl-L-alpha-aminoacyl-tRNA + H2O = an N-acyl-L-amino acid + a tRNA + H(+). In terms of biological role, hydrolyzes ribosome-free peptidyl-tRNAs (with 1 or more amino acids incorporated), which drop off the ribosome during protein synthesis, or as a result of ribosome stalling. Its function is as follows. Catalyzes the release of premature peptidyl moieties from peptidyl-tRNA molecules trapped in stalled 50S ribosomal subunits, and thus maintains levels of free tRNAs and 50S ribosomes. This Chlamydia muridarum (strain MoPn / Nigg) protein is Peptidyl-tRNA hydrolase.